A 213-amino-acid polypeptide reads, in one-letter code: Thymidylate kinase (213 aa).

10–17 (GLEGAGKT) provides a ligand contact to ATP.

It belongs to the thymidylate kinase family.

It catalyses the reaction dTMP + ATP = dTDP + ADP. Its function is as follows. Phosphorylation of dTMP to form dTDP in both de novo and salvage pathways of dTTP synthesis. This is Thymidylate kinase from Escherichia coli O7:K1 (strain IAI39 / ExPEC).